The chain runs to 356 residues: Trans-enoyl reductase pgmF (356 aa).

Residues 57–60 (VDFK), 175–178 (SGGC), 198–201 (STPN), Tyr-216, 261–262 (VG), and 342–343 (AK) each bind NADP(+).

This sequence belongs to the zinc-containing alcohol dehydrogenase family.

Its function is as follows. FAD-linked oxidoreductase; part of the gene cluster that mediates the biosynthesis of pleosporalin A, ascomycone A, as well as a third cryptic naphthoquinone derived pigment, all responsible for the coloration of conidia. The pathway begins with the biosynthesis of the cyclized heptaketide 3-acetonyl-1,6,8-trihydroxy-2-naphthaldehyde by the NR-PKS pgmA. The C-6 hydroxyl group is further methylated by the O-methyltransferase pgmB to yield fusarubinaldehyde which is in turn oxidized by the cytochrome P450 monooxygenase pgmC at C-9. The C-1 hydroxyl group is then methylated spontaneously. Although pgmE, pgmD and pgmH are essential for the production of pleosporalin A, it is not the case for the 2 other final products and it remains difficult to assign a specific function to each enzyme. PgmF and pgmG seem not to be involved in pigment biosynthesis although they were regulated by the cluster-specific transcription factor pgmR. The sequence is that of Trans-enoyl reductase pgmF from Aspergillus terreus.